Consider the following 572-residue polypeptide: Proline--tRNA ligase (572 aa).

Belongs to the class-II aminoacyl-tRNA synthetase family. ProS type 1 subfamily. Homodimer.

It localises to the cytoplasm. The enzyme catalyses tRNA(Pro) + L-proline + ATP = L-prolyl-tRNA(Pro) + AMP + diphosphate. In terms of biological role, catalyzes the attachment of proline to tRNA(Pro) in a two-step reaction: proline is first activated by ATP to form Pro-AMP and then transferred to the acceptor end of tRNA(Pro). As ProRS can inadvertently accommodate and process non-cognate amino acids such as alanine and cysteine, to avoid such errors it has two additional distinct editing activities against alanine. One activity is designated as 'pretransfer' editing and involves the tRNA(Pro)-independent hydrolysis of activated Ala-AMP. The other activity is designated 'posttransfer' editing and involves deacylation of mischarged Ala-tRNA(Pro). The misacylated Cys-tRNA(Pro) is not edited by ProRS. The sequence is that of Proline--tRNA ligase from Escherichia coli O139:H28 (strain E24377A / ETEC).